The sequence spans 174 residues: Acetolactate synthase small subunit (174 aa).

The region spanning 4 to 78 (TLSVLVQDEA…NILNVQDVTN (75 aa)) is the ACT domain.

The protein belongs to the acetolactate synthase small subunit family. As to quaternary structure, dimer of large and small chains.

It localises to the plastid. The protein localises to the chloroplast. It catalyses the reaction 2 pyruvate + H(+) = (2S)-2-acetolactate + CO2. It functions in the pathway amino-acid biosynthesis; L-isoleucine biosynthesis; L-isoleucine from 2-oxobutanoate: step 1/4. It participates in amino-acid biosynthesis; L-valine biosynthesis; L-valine from pyruvate: step 1/4. In Porphyra purpurea (Red seaweed), this protein is Acetolactate synthase small subunit (ilvH).